The following is a 313-amino-acid chain: Methionyl-tRNA formyltransferase (313 aa).

109 to 112 lines the (6S)-5,6,7,8-tetrahydrofolate pocket; sequence SLLP.

This sequence belongs to the Fmt family.

The enzyme catalyses L-methionyl-tRNA(fMet) + (6R)-10-formyltetrahydrofolate = N-formyl-L-methionyl-tRNA(fMet) + (6S)-5,6,7,8-tetrahydrofolate + H(+). In terms of biological role, attaches a formyl group to the free amino group of methionyl-tRNA(fMet). The formyl group appears to play a dual role in the initiator identity of N-formylmethionyl-tRNA by promoting its recognition by IF2 and preventing the misappropriation of this tRNA by the elongation apparatus. This chain is Methionyl-tRNA formyltransferase, found in Thermotoga sp. (strain RQ2).